We begin with the raw amino-acid sequence, 295 residues long: Protein U26 (295 aa).

A run of 8 helical transmembrane segments spans residues 4-24 (LTDS…LYTF), 31-51 (SPLG…LTFK), 66-86 (IVFL…VVMI), 103-123 (VMIM…SLFF), 183-203 (FTVE…FLSM), 218-238 (VFFK…ILSG), 243-263 (VCLY…SIML), and 274-294 (FYAG…MYFG).

It is found in the membrane. The polypeptide is Protein U26 (U26) (Human herpesvirus 6A (strain Uganda-1102) (HHV-6 variant A)).